The primary structure comprises 490 residues: ABC transporter ATP-binding protein ModF (490 aa).

2 consecutive ABC transporter domains span residues 4 to 235 (LQIL…AHSE) and 261 to 489 (IVLN…LTKI). ATP-binding positions include 36–43 (GSNGSGKS) and 293–300 (GPNGAGKS).

Belongs to the ABC transporter superfamily.

It localises to the cell inner membrane. Probably not involved in the transport of molybdenum into the cell. The chain is ABC transporter ATP-binding protein ModF (modF) from Escherichia coli (strain K12).